The chain runs to 388 residues: Flavin-dependent monooxygenase (388 aa).

Residue Arg54 participates in NADPH binding. Asp61, Arg117, and Asp311 together coordinate FAD.

Belongs to the aromatic-ring hydroxylase family. TetX subfamily. In terms of assembly, monomer. FAD is required as a cofactor.

The protein localises to the cytoplasm. It carries out the reaction a tetracycline + NADPH + O2 + H(+) = an 11a-hydroxytetracycline + NADP(+) + H2O. The enzyme catalyses tetracycline + NADPH + O2 + H(+) = 11a-hydroxytetracycline + NADP(+) + H2O. It catalyses the reaction oxytetracycline + NADPH + O2 + H(+) = 11a-hydroxy-oxytetracycline + NADP(+) + H2O. An FAD-requiring monooxygenase active on some tetracycline antibiotic derivatives, which leads to their inactivation. Hydroxylates carbon 11a of tetracycline and some analogs. Functionally, confers resistance to tetracycline via an oxidoreductase activity; NADPH is more active than NAD. Expression in E.coli leads to breakdown of tetracycline. Confers resistance to doxycycline, chlortetracycline, oxytetracycline and minocycline. The sequence is that of Flavin-dependent monooxygenase from Bacteroides fragilis.